The following is a 500-amino-acid chain: MIIGYVIGQATTQEALILAERPVRLGTYVVLEYDNVKALGLITNVTRGSPMLDDNMNDIEIVQRLKQFNNSIPVYTKAKVKMLCDMNNHFLMPDIPPFAGTPAREAEDEELKSIYSQDGQIRIGSLIGKNVEVKLNINSFARHLAILAATGSGKSNTVAVLSQRISELGGSVLIFDYHGEYYDSDIKNLNRIEPKLNPLYMTPREFSTLLEIRENAIIQYRILRRAFIKVTNGIREKLKEGQIPFSTLNSQFYELMKDELETQGNSDKKSSAKDEVLNKFEEFMDRYSNVIDLTSSDIIEKVKRGKVNVVSLTQLDEDSMDAVVSHYLRRILDSRKDFKRSKNSGLKFPIIAVIEEAHVFLSKNENTLTKYWASRIAREGRKFGVGLTIVSQRPKGLDENILSQMTNKIILKIIEPTDKKYILESSDNLSEDLAEQLSSLDVGEAIIIGKIVKLPAVVKIDMFEGKLLGSDPDMIGEWKKVEESEKIAKGFADFGTEIGD.

ATP-binding positions include Arg-142, 151–156 (GSGKSN), and 459–460 (KI).

It belongs to the HerA family. Homohexamer. Forms a complex with NurA.

It carries out the reaction Couples ATP hydrolysis with the unwinding of duplex DNA at the replication fork by translocating in the 5'-3' direction. This creates two antiparallel DNA single strands (ssDNA). The leading ssDNA polymer is the template for DNA polymerase III holoenzyme which synthesizes a continuous strand.. The enzyme catalyses ATP + H2O = ADP + phosphate + H(+). The catalysed reaction is Couples ATP hydrolysis with the unwinding of duplex DNA by translocating in the 3'-5' direction.. ATPase activity is stimulated in the presence of linear double-stranded (ds)DNA. Helicase activity requires the presence of NurA. LhrC-Core (Hel112) inhibits the exonuclease activity of the HerA-NurA complex on ss- and dsDNA, has no effect on the nicking activity of NurA. Functionally, involved in DNA double-strand break (DSB) repair. Probably acts with NurA to stimulate resection of the 5' strand and produce the long 3' single-strand that is required for RadA loading. NurA and HerA together stimulate the end-resection of six nucleotides of a linear DNA substrate. Has DNA-dependent ATPase activity and bidirectional DNA helicase activity. Preferentially binds single stranded (ss)DNA, bubble and semiforked DNA substrate over other DNA molecules tested. Stimulates the exo- but not endonuclease activity of NurA. In Saccharolobus solfataricus (strain ATCC 35092 / DSM 1617 / JCM 11322 / P2) (Sulfolobus solfataricus), this protein is DNA double-strand break repair helicase HerA.